The primary structure comprises 86 residues: Anti-adapter protein IraP (86 aa).

The stretch at Met1–Met36 forms a coiled coil.

The protein belongs to the IraP family. Interacts with RssB.

The protein resides in the cytoplasm. Functionally, inhibits RpoS proteolysis by regulating RssB activity, thereby increasing the stability of the sigma stress factor RpoS especially during phosphate starvation, but also in stationary phase and during nitrogen starvation. Its effect on RpoS stability is due to its interaction with RssB, which probably blocks the interaction of RssB with RpoS, and the consequent delivery of the RssB-RpoS complex to the ClpXP protein degradation pathway. The polypeptide is Anti-adapter protein IraP (Escherichia coli (strain SE11)).